Reading from the N-terminus, the 88-residue chain is Small ribosomal subunit protein bS20 (88 aa).

The tract at residues 1 to 36 is disordered; sequence MANTSSAKKATRKIARRTAVNKSRRTQMRGSVRTVE.

It belongs to the bacterial ribosomal protein bS20 family.

Binds directly to 16S ribosomal RNA. This is Small ribosomal subunit protein bS20 from Rhodopseudomonas palustris (strain HaA2).